The sequence spans 225 residues: Recoverin family protein DDB_G0274781 (225 aa).

Residues 1-13 (MGNKQGKSPNNSK) show a composition bias toward low complexity. The disordered stretch occupies residues 1–20 (MGNKQGKSPNNSKGGKKYKI). Glycine 2 carries the N-myristoyl glycine lipid modification. EF-hand domains are found at residues 78–113 (DNSP…LCKG), 114–149 (TAEE…AWIS), and 174–209 (MAQI…HPKI). Residues aspartate 91, asparagine 93, aspartate 95, threonine 97, glutamate 102, aspartate 127, aspartate 129, asparagine 131, tyrosine 133, glutamate 138, aspartate 187, asparagine 189, aspartate 191, lysine 193, and glutamate 198 each coordinate Ca(2+).

It belongs to the recoverin family.

In Dictyostelium discoideum (Social amoeba), this protein is Recoverin family protein DDB_G0274781.